Here is a 149-residue protein sequence, read N- to C-terminus: Large ribosomal subunit protein uL15 (149 aa).

The segment at 14–63 (ASRKRVGRGSGSGLGCTSGKGNKGQNARAGGGVRPGFEGGQMPLQRRLPK) is disordered. Composition is skewed to gly residues over residues 21-35 (RGSG…GKGN) and 42-52 (AGGGVRPGFEG).

Belongs to the universal ribosomal protein uL15 family. In terms of assembly, part of the 50S ribosomal subunit.

Functionally, binds to the 23S rRNA. The protein is Large ribosomal subunit protein uL15 of Nitratidesulfovibrio vulgaris (strain DSM 19637 / Miyazaki F) (Desulfovibrio vulgaris).